The following is a 419-amino-acid chain: Argininosuccinate synthase (419 aa).

9 to 17 (AYSGGLDTS) serves as a coordination point for ATP. Tyr87 lines the L-citrulline pocket. Position 117 (Gly117) interacts with ATP. Thr119, Asn123, and Asp124 together coordinate L-aspartate. An L-citrulline-binding site is contributed by Asn123. L-citrulline-binding residues include Arg127, Ser175, Ser184, Glu260, and Tyr272.

It belongs to the argininosuccinate synthase family. Type 1 subfamily. Homotetramer.

It is found in the cytoplasm. The enzyme catalyses L-citrulline + L-aspartate + ATP = 2-(N(omega)-L-arginino)succinate + AMP + diphosphate + H(+). Its pathway is amino-acid biosynthesis; L-arginine biosynthesis; L-arginine from L-ornithine and carbamoyl phosphate: step 2/3. The sequence is that of Argininosuccinate synthase from Brevibacillus brevis (strain 47 / JCM 6285 / NBRC 100599).